We begin with the raw amino-acid sequence, 90 residues long: Probable Fe(2+)-trafficking protein (90 aa).

It belongs to the Fe(2+)-trafficking protein family.

Its function is as follows. Could be a mediator in iron transactions between iron acquisition and iron-requiring processes, such as synthesis and/or repair of Fe-S clusters in biosynthetic enzymes. This chain is Probable Fe(2+)-trafficking protein, found in Coxiella burnetii (strain CbuK_Q154) (Coxiella burnetii (strain Q154)).